The following is a 357-amino-acid chain: Probable dual-specificity RNA methyltransferase RlmN (357 aa).

The Proton acceptor role is filled by Glu95. One can recognise a Radical SAM core domain in the interval 106 to 340; sequence NRDRHTVCVS…VSVREEKGTD (235 aa). A disulfide bond links Cys113 and Cys345. Positions 120, 124, and 127 each coordinate [4Fe-4S] cluster. Residues 172 to 173, Ser204, 227 to 229, and Asn302 each bind S-adenosyl-L-methionine; these read GE and SLH. Cys345 (S-methylcysteine intermediate) is an active-site residue.

Belongs to the radical SAM superfamily. RlmN family. It depends on [4Fe-4S] cluster as a cofactor.

The protein localises to the cytoplasm. It carries out the reaction adenosine(2503) in 23S rRNA + 2 reduced [2Fe-2S]-[ferredoxin] + 2 S-adenosyl-L-methionine = 2-methyladenosine(2503) in 23S rRNA + 5'-deoxyadenosine + L-methionine + 2 oxidized [2Fe-2S]-[ferredoxin] + S-adenosyl-L-homocysteine. The enzyme catalyses adenosine(37) in tRNA + 2 reduced [2Fe-2S]-[ferredoxin] + 2 S-adenosyl-L-methionine = 2-methyladenosine(37) in tRNA + 5'-deoxyadenosine + L-methionine + 2 oxidized [2Fe-2S]-[ferredoxin] + S-adenosyl-L-homocysteine. Its function is as follows. Specifically methylates position 2 of adenine 2503 in 23S rRNA and position 2 of adenine 37 in tRNAs. This Desulfitobacterium hafniense (strain Y51) protein is Probable dual-specificity RNA methyltransferase RlmN.